Consider the following 706-residue polypeptide: ATP-dependent zinc metalloprotease FtsH (706 aa).

Over residues 1 to 17 the composition is skewed to polar residues; sequence MAKNSLKPSNPYNSEPE. Residues 1–20 form a disordered region; sequence MAKNSLKPSNPYNSEPETPQ. The Cytoplasmic segment spans residues 1-24; the sequence is MAKNSLKPSNPYNSEPETPQPRPK. The chain crosses the membrane as a helical span at residues 25–45; it reads LPMIYYVVVIALLIGLQLAFF. The Periplasmic segment spans residues 46-142; that stretch reads WSGSSREIPY…RYEGSPGTTW (97 aa). The segment at 88–111 is disordered; the sequence is GLPKQEEGNDTTRKLLPGAKTPEN. Over residues 91–100 the composition is skewed to basic and acidic residues; the sequence is KQEEGNDTTR. A helical membrane pass occupies residues 143-163; it reads ISELIQWVLPFALLFGLYFFI. The Cytoplasmic segment spans residues 164-706; sequence FRRMGAGGPG…LRQSRNVSDN (543 aa). ATP is bound at residue 239–246; the sequence is GPPGTGKT. His462 contacts Zn(2+). Residue Glu463 is part of the active site. Positions 466 and 539 each coordinate Zn(2+). Residues 641-681 are disordered; that stretch reads RPGGQEEDSGEVDCSKKSAENGMVAHEPETTADAESTEKVG.

In the central section; belongs to the AAA ATPase family. It in the C-terminal section; belongs to the peptidase M41 family. In terms of assembly, homohexamer. The cofactor is Zn(2+).

The protein localises to the cell inner membrane. Its function is as follows. Acts as a processive, ATP-dependent zinc metallopeptidase for both cytoplasmic and membrane proteins. Plays a role in the quality control of integral membrane proteins. The sequence is that of ATP-dependent zinc metalloprotease FtsH from Chlorobium luteolum (strain DSM 273 / BCRC 81028 / 2530) (Pelodictyon luteolum).